The primary structure comprises 44 residues: Photosystem I reaction center subunit IX (44 aa).

Residues 7 to 27 form a helical membrane-spanning segment; the sequence is YLSVAPVLSTLWFGALAGLLI.

It belongs to the PsaJ family.

It is found in the plastid. It localises to the chloroplast thylakoid membrane. Functionally, may help in the organization of the PsaE and PsaF subunits. The protein is Photosystem I reaction center subunit IX of Solanum bulbocastanum (Wild potato).